The following is a 389-amino-acid chain: Homoserine O-acetyltransferase (389 aa).

Positions 1 to 21 (MAALRAGKTNNEADQPSSPVL) are disordered. The segment covering 8–18 (KTNNEADQPSS) has biased composition (polar residues). In terms of domain architecture, AB hydrolase-1 spans 56–366 (NAILVCHALT…DRGHDAFLLD (311 aa)). Catalysis depends on Ser-161, which acts as the Nucleophile. Residue Arg-231 participates in substrate binding. Active-site residues include Asp-327 and His-360. Asp-361 provides a ligand contact to substrate.

It belongs to the AB hydrolase superfamily. MetX family. Homodimer.

The protein resides in the cytoplasm. The enzyme catalyses L-homoserine + acetyl-CoA = O-acetyl-L-homoserine + CoA. It participates in amino-acid biosynthesis; L-methionine biosynthesis via de novo pathway; O-acetyl-L-homoserine from L-homoserine: step 1/1. Its function is as follows. Transfers an acetyl group from acetyl-CoA to L-homoserine, forming acetyl-L-homoserine. In Mesorhizobium japonicum (strain LMG 29417 / CECT 9101 / MAFF 303099) (Mesorhizobium loti (strain MAFF 303099)), this protein is Homoserine O-acetyltransferase.